The chain runs to 621 residues: tRNA uridine 5-carboxymethylaminomethyl modification enzyme MnmG (621 aa).

17–22 (GGGHAG) serves as a coordination point for FAD. Position 276–290 (276–290 (GPRYCPSIEDKIMKF)) interacts with NAD(+).

Belongs to the MnmG family. Homodimer. Heterotetramer of two MnmE and two MnmG subunits. FAD serves as cofactor.

Its subcellular location is the cytoplasm. Its function is as follows. NAD-binding protein involved in the addition of a carboxymethylaminomethyl (cmnm) group at the wobble position (U34) of certain tRNAs, forming tRNA-cmnm(5)s(2)U34. This chain is tRNA uridine 5-carboxymethylaminomethyl modification enzyme MnmG, found in Zymomonas mobilis subsp. mobilis (strain ATCC 31821 / ZM4 / CP4).